We begin with the raw amino-acid sequence, 516 residues long: Cytochrome P450 monooxygenase lcsI (516 aa).

A helical membrane pass occupies residues Ile20–Leu42. N-linked (GlcNAc...) asparagine glycans are attached at residues Asn131, Asn184, Asn415, Asn420, and Asn442. Cys456 is a binding site for heme.

The protein belongs to the cytochrome P450 family. It depends on heme as a cofactor.

It localises to the membrane. Its pathway is secondary metabolite biosynthesis. Cytochrome P450 monooxygenase; part of the gene cluster that mediates the biosynthesis of the lipopeptide antibiotics leucinostatins that show extensive biological activities, including antimalarial, antiviral, antibacterial, antifungal, and antitumor activities, as well as phytotoxic. Leucinostatin A contains nine amino acid residues, including the unusual amino acid 4-methyl-L-proline (MePro), 2-amino-6-hydroxy-4-methyl-8-oxodecanoic acid (AHyMeOA), 3-hydroxyleucine (HyLeu), alpha-aminoisobutyric acid (AIB), beta-Ala, a 4-methylhex-2-enoic acid at the N-terminus as well as a N1,N1-dimethylpropane-1,2-diamine (DPD) at the C-terminus. The biosynthesis of leucinostatins is probably initiated with the assembly of 4-methylhex-2-enoic acid by a reducing PKS. Two reducing polyketide synthases, lcsB and lcsC, have been identified in the cluster and it is not clear which is the one that assembles 4-methylhex-2-enoic acid since both contain KS, AT, DH, cMT, ER, KR and ACP domains. The polyketide residue might be transferred to the NRPS lcsA, mediated by two additional enzymes, the acyl-CoA ligase lcsD and the thioesterase lcsE. The linear polyketide carboxylic acid, which is released from PKS, is converted to a CoA thioester by lcsD, and then lcsE hydrolyzes the thiol bond and shuttles the polyketide intermediate to lcsA. The C domain of the first module catalyzed the condensation of 4-methylhex-2-enoic acid and MePro carried by domain A1, followed by successive condensations of nine amino acids to trigger the elongation of the linear peptide. A5 and A6 domains of lcsA are proposed to incorporate leucine, A2 AHyMeOA, and A3 incorporates HyLeu. A4, A7 and A8 incorporate AIB. The AHyMeOA in leucinostatin A activated by the A2 might be produced by the second PKS (lcsB or lcsC) present within the cluster. The MePro is probably produced via leucine cyclization and may originate from a separate pathway, independent of the cluster. Another nonproteinogenic amino acid, beta-Ala, could be produced by an aspartic acid decarboxylase also localized outside of the cluster. Two candidates are VFPBJ_01400 and VFPBJ_10476. The final peptide scaffold may be released by the NAD(P)H-dependent thioester reductase (TE) at the C-terminal region of lcsA. Transamination of the lcsA product by the transaminase lcsP may produce DPD at the C-terminus. Further hydroxylation steps performed alternatively by the cytochrome P450 monooxygenases lcsI, lcsK and lcsN then yield the non-methylated leucinostatins precursor. It is also possible that leucines can be hydroxylated prior to their incorporation into the peptide. Varying extents of methylation then lead to the formation of leucinostatins A and B. This is Cytochrome P450 monooxygenase lcsI from Purpureocillium lilacinum (Paecilomyces lilacinus).